Consider the following 325-residue polypeptide: uncharacterized protein (325 aa).

A disordered region spans residues 1–75 (MSQPPEHPGN…PPPGYPTHLQ (75 aa)). A compositionally biased stretch (pro residues) spans 24–70 (YPPPGYGAPPPPPGYGPPPGTYLPPGYNAPPPPPGYGPPPGPPPPGY). Transmembrane regions (helical) follow at residues 96–116 (AVTLVVPVLAYAVALAAVIGA), 153–173 (IVMFLGYIALFALVLYMHAGI), 205–225 (LLIVALTFIGGLLCVIPGLIF), and 273–293 (LVGELLCFVGMLIGIPVAALI).

The protein to M.tuberculosis Rv2560.

It localises to the cell membrane. This is an uncharacterized protein from Mycobacterium bovis (strain ATCC BAA-935 / AF2122/97).